Here is a 305-residue protein sequence, read N- to C-terminus: uncharacterized protein (305 aa).

The segment covering 1–10 (MLWAQRKKRK) has biased composition (basic residues). The disordered stretch occupies residues 1–30 (MLWAQRKKRKATTETTEDKPAESHRPNDSW). The span at 16–27 (TEDKPAESHRPN) shows a compositional bias: basic and acidic residues. Position 39 is a phosphoserine (serine 39). Over residues 92 to 101 (QKISGTSVSK) the composition is skewed to polar residues. The disordered stretch occupies residues 92–114 (QKISGTSVSKEMQRESGKSPSME). Serine 158 bears the Phosphoserine mark. The segment covering 197–208 (SHHGNQSHQNHN) has biased composition (low complexity). Positions 197-305 (SHHGNQSHQN…VNRRNQIYDS (109 aa)) are disordered. Polar residues-rich tracts occupy residues 209–221 (TYPCHQNNQSRSV) and 231–244 (LSHQGYPSYSSHQN). Residues 247-293 (GHPSQQGHSSHSNQQGHLGLSSQQGHPSQSSHQSHQGQPGHPNHQSH) are compositionally biased toward low complexity. A compositionally biased stretch (polar residues) spans 294-305 (SLVNRRNQIYDS).

This is an uncharacterized protein from Rattus norvegicus (Rat).